The chain runs to 61 residues: Photosystem II reaction center protein K (61 aa).

Residues 1-24 (MLNIFSLICICLHSTLYSSSFFLA) constitute a propeptide that is removed on maturation. The chain crosses the membrane as a helical span at residues 36–56 (IVDFMPVIPLLFFLLAFVWQA).

Belongs to the PsbK family. PSII is composed of 1 copy each of membrane proteins PsbA, PsbB, PsbC, PsbD, PsbE, PsbF, PsbH, PsbI, PsbJ, PsbK, PsbL, PsbM, PsbT, PsbX, PsbY, PsbZ, Psb30/Ycf12, at least 3 peripheral proteins of the oxygen-evolving complex and a large number of cofactors. It forms dimeric complexes.

Its subcellular location is the plastid. It localises to the chloroplast thylakoid membrane. In terms of biological role, one of the components of the core complex of photosystem II (PSII). PSII is a light-driven water:plastoquinone oxidoreductase that uses light energy to abstract electrons from H(2)O, generating O(2) and a proton gradient subsequently used for ATP formation. It consists of a core antenna complex that captures photons, and an electron transfer chain that converts photonic excitation into a charge separation. The chain is Photosystem II reaction center protein K from Eucalyptus globulus subsp. globulus (Tasmanian blue gum).